The following is a 139-amino-acid chain: ATP synthase epsilon chain (139 aa).

Belongs to the ATPase epsilon chain family. As to quaternary structure, F-type ATPases have 2 components, CF(1) - the catalytic core - and CF(0) - the membrane proton channel. CF(1) has five subunits: alpha(3), beta(3), gamma(1), delta(1), epsilon(1). CF(0) has three main subunits: a, b and c.

The protein resides in the cell inner membrane. Its function is as follows. Produces ATP from ADP in the presence of a proton gradient across the membrane. This chain is ATP synthase epsilon chain, found in Alcanivorax borkumensis (strain ATCC 700651 / DSM 11573 / NCIMB 13689 / SK2).